Reading from the N-terminus, the 292-residue chain is uncharacterized protein (292 aa).

This is an uncharacterized protein from Haemophilus influenzae (strain ATCC 51907 / DSM 11121 / KW20 / Rd).